A 182-amino-acid chain; its full sequence is Transcription termination/antitermination protein NusG (182 aa).

The KOW domain occupies 131–163 (VGEQVRIQSGPFANQIGEVQEIEADKFKLTVLV).

It belongs to the NusG family.

In terms of biological role, participates in transcription elongation, termination and antitermination. This chain is Transcription termination/antitermination protein NusG, found in Staphylococcus epidermidis (strain ATCC 35984 / DSM 28319 / BCRC 17069 / CCUG 31568 / BM 3577 / RP62A).